The following is a 123-amino-acid chain: Large ribosomal subunit protein uL18 (123 aa).

It belongs to the universal ribosomal protein uL18 family. In terms of assembly, part of the 50S ribosomal subunit; part of the 5S rRNA/L5/L18/L25 subcomplex. Contacts the 5S and 23S rRNAs.

Functionally, this is one of the proteins that bind and probably mediate the attachment of the 5S RNA into the large ribosomal subunit, where it forms part of the central protuberance. This is Large ribosomal subunit protein uL18 from Wolbachia pipientis wMel.